The chain runs to 254 residues: Ciliary microtubule associated protein 1A (254 aa).

STPGR repeat units lie at residues 180-205 (PGPA…MAAR) and 216-241 (PGPG…FGIK). The disordered stretch occupies residues 207–226 (EPPGDKTLKPGPGAHSPEKV).

This sequence belongs to the CIMAP family. As to quaternary structure, microtubule inner protein component of sperm flagellar doublet microtubules.

It localises to the cytoplasm. Its subcellular location is the cytoskeleton. It is found in the flagellum axoneme. In terms of biological role, outer dense fibers are filamentous structures located on the outside of the axoneme in the midpiece and principal piece of the mammalian sperm tail. May help to maintain the passive elastic structures and elastic recoil of the sperm tail. This is Ciliary microtubule associated protein 1A (CIMAP1A) from Bos taurus (Bovine).